Reading from the N-terminus, the 214-residue chain is Coiled-coil domain-containing protein 169 (214 aa).

Residues 56 to 138 (SEWKTRYETQ…YAFRLEQESK (83 aa)) adopt a coiled-coil conformation. The interval 154–214 (MTQVSGSNQV…RSNHLPKLNP (61 aa)) is disordered. Polar residues-rich tracts occupy residues 155 to 166 (TQVSGSNQVSKR) and 185 to 195 (HNSMNQKTTNA).

Belongs to the CCDC169 family.

This Mus musculus (Mouse) protein is Coiled-coil domain-containing protein 169 (Ccdc169).